The primary structure comprises 513 residues: Na(+)/H(+) antiporter NhaB (513 aa).

12 helical membrane-spanning segments follow: residues 23–43 (LALI…PFVA), 52–72 (IFTL…LLAI), 97–117 (LLLM…LFIF), 120–140 (LLLS…AAAF), 144–164 (FLDA…FYGI), 202–222 (LMMH…VGEP), 238–258 (FFLR…LTCL), 303–323 (AIIG…VGLI), 348–368 (TESL…AVII), 391–411 (LFYI…VGTI), 447–467 (ATPN…APLI), and 475–495 (VWMA…CVEF).

This sequence belongs to the NhaB Na(+)/H(+) (TC 2.A.34) antiporter family.

It is found in the cell inner membrane. The catalysed reaction is 2 Na(+)(in) + 3 H(+)(out) = 2 Na(+)(out) + 3 H(+)(in). Its function is as follows. Na(+)/H(+) antiporter that extrudes sodium in exchange for external protons. The sequence is that of Na(+)/H(+) antiporter NhaB from Shigella flexneri serotype 5b (strain 8401).